Reading from the N-terminus, the 320-residue chain is R2-like ligand binding oxidase (320 aa).

3 residues coordinate Mn(2+): Glu68, Glu101, and His104. Positions 71–162 form a cross-link, 3-(O4'-tyrosyl)-valine (Val-Tyr); sequence VTKDIQPFMS…AAQVRASVVY (92 aa). Glu101 is a Fe cation binding site. Residues Glu167, Glu202, and His205 each coordinate Fe cation.

This sequence belongs to the ribonucleoside diphosphate reductase small chain family. R2-like ligand binding oxidase subfamily. As to quaternary structure, homodimer. Requires Fe cation as cofactor. The cofactor is Mn(2+).

Its function is as follows. Probable oxidase that might be involved in lipid metabolism. The protein is R2-like ligand binding oxidase (nrdB) of Mycolicibacterium smegmatis (strain ATCC 700084 / mc(2)155) (Mycobacterium smegmatis).